A 920-amino-acid polypeptide reads, in one-letter code: Rho GTPase-activating protein REN1 (920 aa).

Residues 1–10 (MANKNAESSS) are compositionally biased toward polar residues. The tract at residues 1–64 (MANKNAESSS…SRGGNTVFKS (64 aa)) is disordered. The segment covering 17-31 (QPNQQQQQQPPIANE) has biased composition (low complexity). The span at 45-64 (PAQSGNTDSRSRGGNTVFKS) shows a compositional bias: polar residues. In terms of domain architecture, PH spans 60-167 (TVFKSGPLSI…WKAALENALT (108 aa)). Residues 213–412 (LALEDVDGAP…TLLEEYESIF (200 aa)) enclose the Rho-GAP domain. Disordered stretches follow at residues 417–592 (LSPG…NLSM), 719–825 (RLGH…ALSK), and 837–920 (RSQI…TFSR). Positions 434–463 (EGSDDEEYDDDDDGSQGSEDYTDEEEDLEN) are enriched in acidic residues. Polar residues predominate over residues 464 to 473 (ESNGSYSESA). Composition is skewed to basic and acidic residues over residues 475-491 (SEDK…HKIN), 499-509 (KSPKRSKEPKK), and 520-532 (PRHD…EDIV). Positions 555–568 (SSTSDVASDTQKPS) are enriched in polar residues. The span at 577 to 586 (SKRHWGRTPG) shows a compositional bias: basic residues. Residues 598-728 (SVEVDEDNAD…RLGHHDGKAS (131 aa)) are a coiled coil. Composition is skewed to basic and acidic residues over residues 734 to 768 (ASKE…RSTS) and 776 to 788 (RENE…DSRS). Over residues 814 to 825 (EGSTTTTSALSK) the composition is skewed to low complexity. 2 stretches are compositionally biased toward polar residues: residues 854-864 (GQPSPTSGQNR) and 872-885 (GSGS…SKLQ). Over residues 889–903 (ILDRGRSENGGDRGR) the composition is skewed to basic and acidic residues. Residues 910-920 (HPNTTPRTFSR) are compositionally biased toward polar residues.

As to quaternary structure, interacts with ARAC11/ROP1. In terms of tissue distribution, expressed in pollen and pollen tubes.

It is found in the cell membrane. In terms of biological role, acts as a GTPase activator for the Rac-type GTPase by converting it to an inactive GDP-bound state. Maintains the global inactivation of ARAC11/ROP1 at the apex in pollen tubes in order to regulate the polar cell growth. This is Rho GTPase-activating protein REN1 (REN1) from Arabidopsis thaliana (Mouse-ear cress).